The chain runs to 159 residues: Ribosomal RNA large subunit methyltransferase H (159 aa).

S-adenosyl-L-methionine-binding positions include leucine 76, glycine 108, and phenylalanine 127–leucine 132.

It belongs to the RNA methyltransferase RlmH family. Homodimer.

Its subcellular location is the cytoplasm. It carries out the reaction pseudouridine(1915) in 23S rRNA + S-adenosyl-L-methionine = N(3)-methylpseudouridine(1915) in 23S rRNA + S-adenosyl-L-homocysteine + H(+). In terms of biological role, specifically methylates the pseudouridine at position 1915 (m3Psi1915) in 23S rRNA. This Streptococcus agalactiae serotype Ia (strain ATCC 27591 / A909 / CDC SS700) protein is Ribosomal RNA large subunit methyltransferase H.